Consider the following 332-residue polypeptide: Ribosomal RNA small subunit methyltransferase C (332 aa).

It belongs to the methyltransferase superfamily. RsmC family. As to quaternary structure, monomer.

Its subcellular location is the cytoplasm. The catalysed reaction is guanosine(1207) in 16S rRNA + S-adenosyl-L-methionine = N(2)-methylguanosine(1207) in 16S rRNA + S-adenosyl-L-homocysteine + H(+). Specifically methylates the guanine in position 1207 of 16S rRNA in the 30S particle. This chain is Ribosomal RNA small subunit methyltransferase C, found in Pseudomonas aeruginosa (strain UCBPP-PA14).